The primary structure comprises 328 residues: tRNA dimethylallyltransferase (328 aa).

Gly25–Ser32 provides a ligand contact to ATP. Thr27–Ser32 provides a ligand contact to substrate. Positions Asp50–Gln53 are interaction with substrate tRNA.

The protein belongs to the IPP transferase family. As to quaternary structure, monomer. Requires Mg(2+) as cofactor.

It carries out the reaction adenosine(37) in tRNA + dimethylallyl diphosphate = N(6)-dimethylallyladenosine(37) in tRNA + diphosphate. In terms of biological role, catalyzes the transfer of a dimethylallyl group onto the adenine at position 37 in tRNAs that read codons beginning with uridine, leading to the formation of N6-(dimethylallyl)adenosine (i(6)A). The protein is tRNA dimethylallyltransferase of Dehalococcoides mccartyi (strain ATCC BAA-2100 / JCM 16839 / KCTC 5957 / BAV1).